A 356-amino-acid chain; its full sequence is Dual-specificity RNA methyltransferase RlmN (356 aa).

The Proton acceptor role is filled by Glu-92. The Radical SAM core domain occupies 98 to 327; the sequence is EKNRGTLCIS…HQGIRTMTRR (230 aa). Residues Cys-105 and Cys-337 are joined by a disulfide bond. The [4Fe-4S] cluster site is built by Cys-112, Cys-116, and Cys-119. Residues 162 to 163, Ser-194, 216 to 218, and Asn-294 contribute to the S-adenosyl-L-methionine site; these read GE and SLH. Cys-337 (S-methylcysteine intermediate) is an active-site residue.

This sequence belongs to the radical SAM superfamily. RlmN family. [4Fe-4S] cluster serves as cofactor.

Its subcellular location is the cytoplasm. It carries out the reaction adenosine(2503) in 23S rRNA + 2 reduced [2Fe-2S]-[ferredoxin] + 2 S-adenosyl-L-methionine = 2-methyladenosine(2503) in 23S rRNA + 5'-deoxyadenosine + L-methionine + 2 oxidized [2Fe-2S]-[ferredoxin] + S-adenosyl-L-homocysteine. The enzyme catalyses adenosine(37) in tRNA + 2 reduced [2Fe-2S]-[ferredoxin] + 2 S-adenosyl-L-methionine = 2-methyladenosine(37) in tRNA + 5'-deoxyadenosine + L-methionine + 2 oxidized [2Fe-2S]-[ferredoxin] + S-adenosyl-L-homocysteine. Specifically methylates position 2 of adenine 2503 in 23S rRNA and position 2 of adenine 37 in tRNAs. m2A2503 modification seems to play a crucial role in the proofreading step occurring at the peptidyl transferase center and thus would serve to optimize ribosomal fidelity. The protein is Dual-specificity RNA methyltransferase RlmN of Ruthia magnifica subsp. Calyptogena magnifica.